The following is a 218-amino-acid chain: Kynurenine formamidase (218 aa).

Tryptophan 27 provides a ligand contact to substrate. Zn(2+) is bound by residues histidine 57, histidine 61, and aspartate 63. The active-site Proton donor/acceptor is histidine 67. Positions 169 and 181 each coordinate Zn(2+).

The protein belongs to the Cyclase 1 superfamily. KynB family. In terms of assembly, homodimer. It depends on Zn(2+) as a cofactor.

The catalysed reaction is N-formyl-L-kynurenine + H2O = L-kynurenine + formate + H(+). Its pathway is amino-acid degradation; L-tryptophan degradation via kynurenine pathway; L-kynurenine from L-tryptophan: step 2/2. Its activity is regulated as follows. Inhibited by EDTA. Insensitive to phenylmethylsulfonyl fluoride (PMSF). Functionally, catalyzes the hydrolysis of N-formyl-L-kynurenine to L-kynurenine, the second step in the kynurenine pathway of tryptophan degradation. This chain is Kynurenine formamidase, found in Cupriavidus metallidurans (strain ATCC 43123 / DSM 2839 / NBRC 102507 / CH34) (Ralstonia metallidurans).